The chain runs to 124 residues: Small ribosomal subunit protein uS12 (124 aa).

A disordered region spans residues 8 to 28 (IRSAREKTDKKTKSPALKSCP). A compositionally biased stretch (basic and acidic residues) spans 10 to 19 (SAREKTDKKT). D89 is modified (3-methylthioaspartic acid).

It belongs to the universal ribosomal protein uS12 family. Part of the 30S ribosomal subunit. Contacts proteins S8 and S17. May interact with IF1 in the 30S initiation complex.

With S4 and S5 plays an important role in translational accuracy. Its function is as follows. Interacts with and stabilizes bases of the 16S rRNA that are involved in tRNA selection in the A site and with the mRNA backbone. Located at the interface of the 30S and 50S subunits, it traverses the body of the 30S subunit contacting proteins on the other side and probably holding the rRNA structure together. The combined cluster of proteins S8, S12 and S17 appears to hold together the shoulder and platform of the 30S subunit. The polypeptide is Small ribosomal subunit protein uS12 (Arthrospira platensis (Spirulina platensis)).